The following is a 312-amino-acid chain: Acetaldehyde dehydrogenase (312 aa).

Ser-11–Ile-14 provides a ligand contact to NAD(+). Cys-129 (acyl-thioester intermediate) is an active-site residue. Residues Ser-160–Asn-168 and Asn-287 each bind NAD(+).

It belongs to the acetaldehyde dehydrogenase family.

It catalyses the reaction acetaldehyde + NAD(+) + CoA = acetyl-CoA + NADH + H(+). This Sphingobium yanoikuyae (Sphingomonas yanoikuyae) protein is Acetaldehyde dehydrogenase (xylQ).